A 392-amino-acid polypeptide reads, in one-letter code: RNA-binding protein 42 (392 aa).

An RRM domain is found at 293–371; that stretch reads FRIFCGDLGN…RPIKLRKSQW (79 aa). The segment at 372 to 392 is disordered; sequence KDRNMDVVRKKQREKKKLGLR. Residues 381–392 show a composition bias toward basic residues; it reads KKQREKKKLGLR.

This sequence belongs to the RRM RBM42 family.

The protein resides in the nucleus. The protein localises to the cytoplasm. Functionally, may bind RNA. In Xenopus tropicalis (Western clawed frog), this protein is RNA-binding protein 42 (rbm42).